The chain runs to 567 residues: Microtubule-associated protein 70-1 (567 aa).

A coiled-coil region spans residues Val38–Asp341. The interval Ile220–Ser440 is required for targeting to microtubules. 2 disordered regions span residues Lys425 to Ser457 and Leu534 to Met567. Positions Ser440–Asn453 are enriched in basic and acidic residues. The stretch at Lys516–Phe545 forms a coiled coil.

The protein belongs to the MAP70 family.

The protein localises to the cytoplasm. It localises to the cytoskeleton. Plant-specific protein that interact with microtubules. The polypeptide is Microtubule-associated protein 70-1 (MAP70.1) (Oryza sativa subsp. japonica (Rice)).